Reading from the N-terminus, the 276-residue chain is Formamidopyrimidine-DNA glycosylase (276 aa).

The Schiff-base intermediate with DNA role is filled by P2. The Proton donor role is filled by E3. The active-site Proton donor; for beta-elimination activity is K60. H93 and R112 together coordinate DNA. An FPG-type zinc finger spans residues 240–274 (HVYGRKQQPCHHCDTAIEKTVVGGRGTHYCPNCQP). Residue R264 is the Proton donor; for delta-elimination activity of the active site.

This sequence belongs to the FPG family. As to quaternary structure, monomer. Zn(2+) serves as cofactor.

The enzyme catalyses Hydrolysis of DNA containing ring-opened 7-methylguanine residues, releasing 2,6-diamino-4-hydroxy-5-(N-methyl)formamidopyrimidine.. The catalysed reaction is 2'-deoxyribonucleotide-(2'-deoxyribose 5'-phosphate)-2'-deoxyribonucleotide-DNA = a 3'-end 2'-deoxyribonucleotide-(2,3-dehydro-2,3-deoxyribose 5'-phosphate)-DNA + a 5'-end 5'-phospho-2'-deoxyribonucleoside-DNA + H(+). Functionally, involved in base excision repair of DNA damaged by oxidation or by mutagenic agents. Acts as a DNA glycosylase that recognizes and removes damaged bases. Has a preference for oxidized purines, such as 7,8-dihydro-8-oxoguanine (8-oxoG). Has AP (apurinic/apyrimidinic) lyase activity and introduces nicks in the DNA strand. Cleaves the DNA backbone by beta-delta elimination to generate a single-strand break at the site of the removed base with both 3'- and 5'-phosphates. The protein is Formamidopyrimidine-DNA glycosylase of Shouchella clausii (strain KSM-K16) (Alkalihalobacillus clausii).